The sequence spans 221 residues: Large ribosomal subunit protein uL3 (221 aa).

This sequence belongs to the universal ribosomal protein uL3 family. As to quaternary structure, part of the 50S ribosomal subunit. Forms a cluster with proteins L14 and L19.

One of the primary rRNA binding proteins, it binds directly near the 3'-end of the 23S rRNA, where it nucleates assembly of the 50S subunit. This chain is Large ribosomal subunit protein uL3, found in Chlamydia abortus (strain DSM 27085 / S26/3) (Chlamydophila abortus).